A 320-amino-acid polypeptide reads, in one-letter code: o-succinylbenzoate synthase (320 aa).

Lysine 133 serves as the catalytic Proton donor. Aspartate 161, glutamate 190, and aspartate 213 together coordinate Mg(2+). The active-site Proton acceptor is lysine 235.

The protein belongs to the mandelate racemase/muconate lactonizing enzyme family. MenC type 1 subfamily. The cofactor is a divalent metal cation.

It catalyses the reaction (1R,6R)-6-hydroxy-2-succinyl-cyclohexa-2,4-diene-1-carboxylate = 2-succinylbenzoate + H2O. It participates in quinol/quinone metabolism; 1,4-dihydroxy-2-naphthoate biosynthesis; 1,4-dihydroxy-2-naphthoate from chorismate: step 4/7. Its pathway is quinol/quinone metabolism; menaquinone biosynthesis. Converts 2-succinyl-6-hydroxy-2,4-cyclohexadiene-1-carboxylate (SHCHC) to 2-succinylbenzoate (OSB). The polypeptide is o-succinylbenzoate synthase (Salmonella paratyphi B (strain ATCC BAA-1250 / SPB7)).